A 210-amino-acid polypeptide reads, in one-letter code: Chloramphenicol acetyltransferase (210 aa).

H79 is an active-site residue.

It belongs to the transferase hexapeptide repeat family.

The enzyme catalyses chloramphenicol + acetyl-CoA = chloramphenicol 3-acetate + CoA. Its function is as follows. This enzyme is an effector of chloramphenicol resistance in bacteria. The polypeptide is Chloramphenicol acetyltransferase (catB4) (Klebsiella aerogenes (Enterobacter aerogenes)).